A 419-amino-acid polypeptide reads, in one-letter code: MATPIATTTNTPTKAGSLTIAGSGIASVGHITLETLAYIKESHKVFYLVCDPVTEAFIQENGKGPCINLSIYYDSQKSRYDSYLQMCEVMLRDVRNGLDVLGVFYGHPGVFVSPSHRAIALAREEGFNAKMLAGVSAEDCLFADLEFDPASFGCMTCEASELLIRNRPLNPYIHNVIWQVGSVGVTDMTFNNNKFPILIDRLEKDFGPNHTVIHYVGRVIPQSVSKIETFTIADLRKEEVMNHFDAISTLYVPPRDISPVDPTMAEKLGPSGTRVEPIEAFRPSLKWSAQNDKRSYAYNPYESDVVAQLDNYVTPEGHRILQGSPAMKKFLITLATSPQLLQAYRENPSAIVDTVEGLNEQEKYGLKLGSEGAVYALMSRPTGDIAREKELTNDEIANNHGAPYAFVSAVIIAAIICAL.

The methyltransferase domain stretch occupies residues 1-255; sequence MATPIATTTN…AISTLYVPPR (255 aa). Catalysis depends on residues Arg-79, Tyr-83, and Tyr-105. S-adenosyl-L-methionine contacts are provided by Tyr-105, His-107, Val-110, Ala-137, Gln-179, Gly-217, Ser-248, and Thr-249. The tract at residues 256-381 is clasp domain; that stretch reads DISPVDPTMA…GAVYALMSRP (126 aa). The segment at 382–404 is precursor leader; sequence TGDIAREKELTNDEIANNHGAPY. An N-methylserine modification is found at Ser-408. Ala-409 carries the N-methylalanine modification. Val-410 bears the N-methylvaline mark. Residues Ile-411 and Ile-412 each carry the N-methylisoleucine modification. N-methylalanine occurs at positions 413 and 414. An N-methylisoleucine mark is found at Ile-415 and Ile-416.

The protein in the N-terminal section; belongs to the precorrin methyltransferase family. In terms of assembly, homodimer. Post-translationally, gjuMA automethylates at Ser-408, Ala-409, Val-410, Ile-411, Ile-412, Ala-413, Ala-414, Ile-415 and Ile-416 before being processed by ae prolyloligopeptidase which likely forms a peptidyl ester upon removal of the follower propeptide, which then undergoes macrocyclization with the N-terminus of the modified core peptide. Peptide backbone alpha-N-methylations change the physicochemical properties of amide bonds to provide structural constraints and other favorable characteristics including biological membrane permeability to peptides.

The protein operates within secondary metabolite biosynthesis. In terms of biological role, fusion protein of the methyltransferase gjuM and the type I borosin core peptide; part of the gene cluster that mediates the biosynthesis of a type I borosin, a highly methylated cyclic peptide with potent biological activities. Type I borosins derive from the C-terminus of the fusion protein, and it is the same protein that methylates its own C-terminus using S-adenosyl methionine (SAM). The C-terminus is subsequently cleaved off and macrocyclized by a prolyloligopeptidase to give the final product. This is Methyltransferase/ribosomally synthesized type I borosin cyclic peptide precursor gjuMa from Gymnopilus junonius (Spectacular rustgill mushroom).